A 212-amino-acid chain; its full sequence is Redox-sensing transcriptional repressor Rex (212 aa).

Residues 17–56 (KYHRYLQELMENDVDRISSKELSEKIGFTASQIRQDLNCF) constitute a DNA-binding region (H-T-H motif). 91–96 (GAGNIG) provides a ligand contact to NAD(+).

It belongs to the transcriptional regulatory Rex family. As to quaternary structure, homodimer.

Its subcellular location is the cytoplasm. Modulates transcription in response to changes in cellular NADH/NAD(+) redox state. The polypeptide is Redox-sensing transcriptional repressor Rex (Clostridium perfringens (strain ATCC 13124 / DSM 756 / JCM 1290 / NCIMB 6125 / NCTC 8237 / Type A)).